A 336-amino-acid chain; its full sequence is N6-methyladenosine RNA methyltransferase MTA1 (336 aa).

The segment at 61–83 (LISSEPPHLPFKTPEPKAGSGGL) is disordered.

Belongs to the MT-A70-like family.

The catalysed reaction is an adenosine in mRNA + S-adenosyl-L-methionine = an N(6)-methyladenosine in mRNA + S-adenosyl-L-homocysteine + H(+). Functionally, N6-methyladenosine RNA methyltransferase that plays a crucial role in fungal phenotypic traits, virulence, and stress tolerance. Mediates the methylation of mRNAs to produce N6-methyladenosine (m6A)-containing mRNAs. M6A is a modification present at internal sites of mRNAs and some non-coding RNAs and plays a role in mRNA stability and processing. Mediates specifically acid phosphatase APHA mRNA stability through a YTHDF1-dependent m6A modification of the A1306, A1341, and A1666 key methylation modification sites. Also mediates the stability of the transcription factor ZAP1 mRNA via modification of residue A1935 localized in the 3'UTR. In Cryphonectria parasitica (strain ATCC 38755 / EP155), this protein is N6-methyladenosine RNA methyltransferase MTA1.